The primary structure comprises 94 residues: Integration host factor subunit beta (94 aa).

This sequence belongs to the bacterial histone-like protein family. Heterodimer of an alpha and a beta chain.

This protein is one of the two subunits of integration host factor, a specific DNA-binding protein that functions in genetic recombination as well as in transcriptional and translational control. This is Integration host factor subunit beta from Pectobacterium atrosepticum (strain SCRI 1043 / ATCC BAA-672) (Erwinia carotovora subsp. atroseptica).